A 150-amino-acid polypeptide reads, in one-letter code: 3-dehydroquinate dehydratase (150 aa).

Tyr-26 (proton acceptor) is an active-site residue. Residues Asn-77, His-83, and Asp-90 each coordinate substrate. The Proton donor role is filled by His-103. Substrate-binding positions include 104-105 and Arg-114; that span reads LS.

Belongs to the type-II 3-dehydroquinase family. In terms of assembly, homododecamer.

It catalyses the reaction 3-dehydroquinate = 3-dehydroshikimate + H2O. The protein operates within metabolic intermediate biosynthesis; chorismate biosynthesis; chorismate from D-erythrose 4-phosphate and phosphoenolpyruvate: step 3/7. Catalyzes a trans-dehydration via an enolate intermediate. This is 3-dehydroquinate dehydratase from Pectobacterium carotovorum subsp. carotovorum (strain PC1).